We begin with the raw amino-acid sequence, 243 residues long: UPF0246 protein SpyM3_1790 (243 aa).

It belongs to the UPF0246 family.

In Streptococcus pyogenes serotype M3 (strain ATCC BAA-595 / MGAS315), this protein is UPF0246 protein SpyM3_1790.